Reading from the N-terminus, the 283-residue chain is Putative pyruvate, phosphate dikinase regulatory protein (283 aa).

154–161 (GVSRTSKT) lines the ADP pocket.

Belongs to the pyruvate, phosphate/water dikinase regulatory protein family. PDRP subfamily.

The catalysed reaction is N(tele)-phospho-L-histidyl/L-threonyl-[pyruvate, phosphate dikinase] + ADP = N(tele)-phospho-L-histidyl/O-phospho-L-threonyl-[pyruvate, phosphate dikinase] + AMP + H(+). It carries out the reaction N(tele)-phospho-L-histidyl/O-phospho-L-threonyl-[pyruvate, phosphate dikinase] + phosphate + H(+) = N(tele)-phospho-L-histidyl/L-threonyl-[pyruvate, phosphate dikinase] + diphosphate. Functionally, bifunctional serine/threonine kinase and phosphorylase involved in the regulation of the pyruvate, phosphate dikinase (PPDK) by catalyzing its phosphorylation/dephosphorylation. The sequence is that of Putative pyruvate, phosphate dikinase regulatory protein from Afipia carboxidovorans (strain ATCC 49405 / DSM 1227 / KCTC 32145 / OM5) (Oligotropha carboxidovorans).